A 726-amino-acid chain; its full sequence is MDDVSKCPFSGGLKGFKNKDWWPNQLDLSVLHQHSNLSDPLGEAFDYAKEFKSLDLDALVKDLHALMTDSQEWWPADFGHYGPLFIRMAWHAAGTYRIGDGRGGAGTGQQRFAPLNSWPDNANLDKARRLLWPIKQKYGQKISWADLFVLTGNVALESMGFKTFGFGGGRADTWEPEQDIYWGPEGKWLADERYSGDRELAGSLAAVQMGLIYVNPEGPNGKPDPAAAARDIRETFARMAMNDEETVALIAGGHTFGKTHGAGDASLVGVEPEGADIAQQGLGWASKYASGKAGDTITSGLEVIWTTTPTKWSNNYFENLFNYEWELTKSPAGAHQWTPKGGAGAGTVPDAHDPSKRHAPSMLTTDIALRVDPAYEKISRRFLEHPDQFADAFARAWFKLTHRDMGPKARYLGPLVPKEELIWQDPVPALDHPVVDDKDVAALKAKILAAGLSVSQLVSTAWASASTFRGSDKRGGANGARIRLAPQKDWAINNPAELSKVLAKLEGIQKEFNGSATGGKKVSLADLIVLAGNAGVEAAAKKAGVEVTVPFAPGRTDASQEQTDVESFAVLEPTHDGFRNYLSGKQWLSGEELLVDKAQLLTLTAPETTVLVGGLRVLGANAAGSKHGVFTTQPEVLSNDFFVNLLDMGIAWTPVDQGEHTFEGRDRKSGAVKWTATRADLIFGSHSQLRALAEVYASSDAKQKFVKDFVAAWTKVMNLDRFELKA.

Residues 90 to 213 (WHAAGTYRIG…LAAVQMGLIY (124 aa)) constitute a cross-link (tryptophyl-tyrosyl-methioninium (Trp-Tyr) (with M-239)). His-91 (proton acceptor) is an active-site residue. Positions 213 to 239 (YVNPEGPNGKPDPAAAARDIRETFARM) form a cross-link, tryptophyl-tyrosyl-methioninium (Tyr-Met) (with W-90). His-254 contacts heme b. Residues 338–359 (TPKGGAGAGTVPDAHDPSKRHA) form a disordered region.

The protein belongs to the peroxidase family. Peroxidase/catalase subfamily. Homodimer or homotetramer. Heme b is required as a cofactor. Post-translationally, formation of the three residue Trp-Tyr-Met cross-link is important for the catalase, but not the peroxidase activity of the enzyme.

It catalyses the reaction H2O2 + AH2 = A + 2 H2O. The enzyme catalyses 2 H2O2 = O2 + 2 H2O. In terms of biological role, bifunctional enzyme with both catalase and broad-spectrum peroxidase activity. The sequence is that of Catalase-peroxidase from Bradyrhizobium sp. (strain ORS 278).